A 200-amino-acid polypeptide reads, in one-letter code: Large ribosomal subunit protein uL4 (200 aa).

A disordered region spans residues 38–68; the sequence is GRQGSKQQKTRSDVRGGGKRPWRQKGTGRAR. Positions 54-65 are enriched in basic residues; it reads GGKRPWRQKGTG.

The protein belongs to the universal ribosomal protein uL4 family. In terms of assembly, part of the 50S ribosomal subunit.

Functionally, one of the primary rRNA binding proteins, this protein initially binds near the 5'-end of the 23S rRNA. It is important during the early stages of 50S assembly. It makes multiple contacts with different domains of the 23S rRNA in the assembled 50S subunit and ribosome. Its function is as follows. Forms part of the polypeptide exit tunnel. This chain is Large ribosomal subunit protein uL4, found in Pseudomonas syringae pv. tomato (strain ATCC BAA-871 / DC3000).